Reading from the N-terminus, the 62-residue chain is uncharacterized protein (62 aa).

Positions 26–62 (YELATLYEAMQKENEEQIEQSKNKLERLRKEWIRLNG) form a coiled coil.

This is an uncharacterized protein from Bacillus subtilis (strain 168).